We begin with the raw amino-acid sequence, 377 residues long: Erythronate-4-phosphate dehydrogenase (377 aa).

Substrate is bound by residues Ser59 and Thr81. Asp162 is an NAD(+) binding site. Residue Arg237 is part of the active site. Asp260 contacts NAD(+). The active site involves Glu265. The Proton donor role is filled by His282. NAD(+) is bound at residue Gly285. Tyr286 contacts substrate.

It belongs to the D-isomer specific 2-hydroxyacid dehydrogenase family. PdxB subfamily. Homodimer.

The protein localises to the cytoplasm. It catalyses the reaction 4-phospho-D-erythronate + NAD(+) = (R)-3-hydroxy-2-oxo-4-phosphooxybutanoate + NADH + H(+). It participates in cofactor biosynthesis; pyridoxine 5'-phosphate biosynthesis; pyridoxine 5'-phosphate from D-erythrose 4-phosphate: step 2/5. In terms of biological role, catalyzes the oxidation of erythronate-4-phosphate to 3-hydroxy-2-oxo-4-phosphonooxybutanoate. This Psychrobacter arcticus (strain DSM 17307 / VKM B-2377 / 273-4) protein is Erythronate-4-phosphate dehydrogenase.